Here is a 419-residue protein sequence, read N- to C-terminus: Serine hydroxymethyltransferase (419 aa).

Residues leucine 121 and 125–127 (GHL) contribute to the (6S)-5,6,7,8-tetrahydrofolate site. Lysine 229 is subject to N6-(pyridoxal phosphate)lysine. 354–356 (SPF) contacts (6S)-5,6,7,8-tetrahydrofolate.

The protein belongs to the SHMT family. In terms of assembly, homodimer. Requires pyridoxal 5'-phosphate as cofactor.

Its subcellular location is the cytoplasm. The enzyme catalyses (6R)-5,10-methylene-5,6,7,8-tetrahydrofolate + glycine + H2O = (6S)-5,6,7,8-tetrahydrofolate + L-serine. It participates in one-carbon metabolism; tetrahydrofolate interconversion. It functions in the pathway amino-acid biosynthesis; glycine biosynthesis; glycine from L-serine: step 1/1. Catalyzes the reversible interconversion of serine and glycine with tetrahydrofolate (THF) serving as the one-carbon carrier. This reaction serves as the major source of one-carbon groups required for the biosynthesis of purines, thymidylate, methionine, and other important biomolecules. Also exhibits THF-independent aldolase activity toward beta-hydroxyamino acids, producing glycine and aldehydes, via a retro-aldol mechanism. The protein is Serine hydroxymethyltransferase of Coxiella burnetii (strain RSA 331 / Henzerling II).